Reading from the N-terminus, the 612-residue chain is Heparan-sulfate 6-O-sulfotransferase 2 (612 aa).

Residues 1-4 (MALP) are Cytoplasmic-facing. A helical; Signal-anchor for type II membrane protein transmembrane segment spans residues 5–27 (AFAARALGPPLQPEQGAPARTTC). Residues 9-52 (RALGPPLQPEQGAPARTTCPRRHSRVEAELAASRPGSVAASVRA) form a disordered region. At 28 to 612 (PRRHSRVEAE…DYIGSVETWR (585 aa)) the chain is on the lumenal side. A glycan (N-linked (GlcNAc...) asparagine) is linked at Asn209. Residue 233-241 (HIQKTGGTT) coordinates 3'-phosphoadenylyl sulfate. Residues 263-264 (KK), Arg280, Trp285, and His290 each bind substrate. The Proton acceptor role is filled by His290. Residues Arg325 and Ser333 each coordinate 3'-phosphoadenylyl sulfate. Substrate-binding residues include His337 and Trp344. Residue Asn404 is glycosylated (N-linked (GlcNAc...) asparagine). 457–459 (TQY) serves as a coordination point for 3'-phosphoadenylyl sulfate. Asn460 carries an N-linked (GlcNAc...) asparagine glycan. Residue 463–464 (RA) coordinates 3'-phosphoadenylyl sulfate. A disordered region spans residues 529–612 (HFQSQSQGQS…DYIGSVETWR (84 aa)). Residues 531–564 (QSQSQGQSQSQSPGQNLSQNPNPNPNQNLTQNLS) show a composition bias toward low complexity. Asn546, Asn558, Asn562, Asn574, and Asn599 each carry an N-linked (GlcNAc...) asparagine glycan. Residues 565 to 577 (HNLTPSSNPNSTQ) are compositionally biased toward polar residues.

The protein belongs to the sulfotransferase 6 family.

The protein localises to the membrane. The catalysed reaction is alpha-D-glucosaminyl-[heparan sulfate](n) + 3'-phosphoadenylyl sulfate = 6-sulfo-alpha-D-glucosaminyl-[heparan sulfate](n) + adenosine 3',5'-bisphosphate + H(+). Its function is as follows. 6-O-sulfation enzyme which catalyzes the transfer of sulfate from 3'-phosphoadenosine 5'-phosphosulfate (PAPS) to position 6 of the N-sulfoglucosamine residue (GlcNS) of heparan sulfate. The protein is Heparan-sulfate 6-O-sulfotransferase 2 (Hs6st2) of Mus musculus (Mouse).